Reading from the N-terminus, the 122-residue chain is Large ribosomal subunit protein uL14 (122 aa).

Belongs to the universal ribosomal protein uL14 family. As to quaternary structure, part of the 50S ribosomal subunit. Forms a cluster with proteins L3 and L19. In the 70S ribosome, L14 and L19 interact and together make contacts with the 16S rRNA in bridges B5 and B8.

Its function is as follows. Binds to 23S rRNA. Forms part of two intersubunit bridges in the 70S ribosome. This chain is Large ribosomal subunit protein uL14, found in Rickettsia felis (strain ATCC VR-1525 / URRWXCal2) (Rickettsia azadi).